A 385-amino-acid chain; its full sequence is Exopolygalacturonase rpg16 (385 aa).

Residues 1-26 form the signal peptide; it reads MVRFTSFTSPFSAILLLSFGINKVAT. Asn-143, Asn-161, Asn-164, and Asn-180 each carry an N-linked (GlcNAc...) asparagine glycan. A PbH1 1 repeat occupies 165–195; that stretch reads STNLLLHDFIIHTVSNNSNPAKNTDALDLYH. Asp-210 functions as the Proton donor in the catalytic mechanism. Cys-212 and Cys-229 form a disulfide bridge. N-linked (GlcNAc...) asparagine glycans are attached at residues Asn-218 and Asn-226. PbH1 repeat units follow at residues 219-241, 249-270, and 278-299; these read VTKV…GSLG, VTQV…RVKT, and VEDI…IITT. His-233 is a catalytic residue. Residues Asn-256, Asn-282, and Asn-343 are each glycosylated (N-linked (GlcNAc...) asparagine). A disulfide bridge connects residues Cys-344 and Cys-350. One copy of the PbH1 5 repeat lies at 350–376; it reads CSDVTLTNINISKASNNTKNVCVNLKG. N-linked (GlcNAc...) asparagine glycans are attached at residues Asn-359 and Asn-365.

It belongs to the glycosyl hydrolase 28 family. N-glycosylated.

Its subcellular location is the secreted. It catalyses the reaction [(1-&gt;4)-alpha-D-galacturonosyl](n) + H2O = alpha-D-galacturonate + [(1-&gt;4)-alpha-D-galacturonosyl](n-1). Functionally, specific in hydrolyzing the terminal glycosidic bond of polygalacturonic acid and oligogalacturonates. In Rhizopus delemar (strain RA 99-880 / ATCC MYA-4621 / FGSC 9543 / NRRL 43880) (Mucormycosis agent), this protein is Exopolygalacturonase rpg16.